The primary structure comprises 316 residues: Large ribosomal subunit protein uL10 (316 aa).

Residues 282 to 316 (ASAAKADEPKKEEAKKVEEEEEEEEDGFMGFGMFD) are disordered. Over residues 286–299 (KADEPKKEEAKKVE) the composition is skewed to basic and acidic residues.

The protein belongs to the universal ribosomal protein uL10 family. P0 forms a pentameric complex by interaction with dimers of P1 and P2. Post-translationally, phosphorylated.

Functionally, ribosomal protein P0 is the functional equivalent of E.coli protein L10. In Plasmodium falciparum (isolate 7G8), this protein is Large ribosomal subunit protein uL10 (RPLP0).